The sequence spans 874 residues: Alanine--tRNA ligase (874 aa).

Zn(2+)-binding residues include His562, His566, Cys664, and His668.

Belongs to the class-II aminoacyl-tRNA synthetase family. Zn(2+) is required as a cofactor.

It localises to the cytoplasm. It carries out the reaction tRNA(Ala) + L-alanine + ATP = L-alanyl-tRNA(Ala) + AMP + diphosphate. Its function is as follows. Catalyzes the attachment of alanine to tRNA(Ala) in a two-step reaction: alanine is first activated by ATP to form Ala-AMP and then transferred to the acceptor end of tRNA(Ala). Also edits incorrectly charged Ser-tRNA(Ala) and Gly-tRNA(Ala) via its editing domain. The polypeptide is Alanine--tRNA ligase (Neisseria meningitidis serogroup B (strain ATCC BAA-335 / MC58)).